A 665-amino-acid polypeptide reads, in one-letter code: Auxin response factor 1 (665 aa).

Residues Phe124–Met226 constitute a DNA-binding region (TF-B3). 3 disordered regions span residues Val356–Leu408, Pro496–Arg542, and Lys645–Arg665. Composition is skewed to polar residues over residues Val497–Pro519, Leu530–Arg542, and Asn651–Arg665. The region spanning Arg542–Lys635 is the PB1 domain.

Belongs to the ARF family. In terms of assembly, homodimers and heterodimers. Interacts with the auxin-responsive proteins IAA12, IAA13, IAA17 and with ARF2. Binds to RIN13 in the nucleus. In terms of tissue distribution, expressed in the whole plant.

It is found in the nucleus. It localises to the cytoplasm. Auxin response factors (ARFs) are transcriptional factors that bind specifically to the DNA sequence 5'-TGTCTC-3' found in the auxin-responsive promoter elements (AuxREs). Seems to act as transcriptional repressor. Formation of heterodimers with Aux/IAA proteins may alter their ability to modulate early auxin response genes expression. Promotes flowering, stamen development, floral organ abscission and fruit dehiscence. Acts as a repressor of IAA2, IAA3 and IAA7. Together with RIN13, promotes leaf senescence and cell death. The polypeptide is Auxin response factor 1 (Arabidopsis thaliana (Mouse-ear cress)).